A 550-amino-acid polypeptide reads, in one-letter code: Chaperonin GroEL (550 aa).

Residues 29–32 (TLGP), Lys50, 86–90 (DGTTT), Gly414, and Asp495 each bind ATP.

The protein belongs to the chaperonin (HSP60) family. In terms of assembly, forms a cylinder of 14 subunits composed of two heptameric rings stacked back-to-back. Interacts with the co-chaperonin GroES.

It localises to the cytoplasm. The enzyme catalyses ATP + H2O + a folded polypeptide = ADP + phosphate + an unfolded polypeptide.. In terms of biological role, together with its co-chaperonin GroES, plays an essential role in assisting protein folding. The GroEL-GroES system forms a nano-cage that allows encapsulation of the non-native substrate proteins and provides a physical environment optimized to promote and accelerate protein folding. The polypeptide is Chaperonin GroEL (Parvibaculum lavamentivorans (strain DS-1 / DSM 13023 / NCIMB 13966)).